Consider the following 491-residue polypeptide: MKNTDTAEALPQSKLNLDELTPTIPHISFDSEDGQQFFWGEDFHLIIESLSKKYGDIYSVETAKGPIVALNGYQYVREALVAQNDVFNVRADYEILQIAPQKHFLELEAGEQWQVHRKVFANAMREYFSTRWDQIETWMTTEVNDIAAVWKAQGDVSFDPNREVSLKLASFLHKVMFDDRFGEFEVSIFDEKSLSWLPNGFINSTRHELMPTDLQERYYQQYGDAIEKFSSNLNGLDQYVSFNVNRRKEDYVAGEYRDLCDYLFAANDSVDDATKAGLNIGEKEIVVGSLTQVAGAGGGVGAFAMRWALLYLAAFPEYQARVQKELDEVVGDDEVPLNKHKADLPYTQAFIAEVLRHCSITSMPAANYATSKDTLLDGYFIPEGTPLVINNYSITRDETLWENPDEFIPERFLDDNGELSKKQQGKAFPFGLGQRRCLGELFGKYIIHTLFAQLAHKFEFSIPEGKQVNLKAISGVFLVPEEVDIKAKSRL.

Residue cysteine 437 coordinates heme.

The protein belongs to the cytochrome P450 family. The cofactor is heme.

Functionally, cytochrome P450 protein involved in the biosynthesis of polybrominated aromatic organic compounds. In the presence of ferredoxin, ferredoxin reductase and NADH, catalyzes the coupling of bromophenols and bromopyrroles, forming various polybrominated biphenyls and hydroxylated polybrominated diphenyl ethers (OH-BDE). Can also mediate the heterocoupling of 3,5-dibromocatechol. Can also use chlorinated phenolic substrates. 2,3,4-tribromopyrrole could be the physiological substrate. This is Polybrominated aromatic compounds synthase from Pseudoalteromonas luteoviolacea (strain 2ta16).